A 529-amino-acid chain; its full sequence is Peptide chain release factor 3 (529 aa).

Residues 11-280 form the tr-type G domain; the sequence is AKRRTFAIIS…GLVAWAPAPM (270 aa). GTP-binding positions include 20–27, 88–92, and 142–145; these read SHPDAGKT, DTPGH, and NKLD.

This sequence belongs to the TRAFAC class translation factor GTPase superfamily. Classic translation factor GTPase family. PrfC subfamily.

Its subcellular location is the cytoplasm. In terms of biological role, increases the formation of ribosomal termination complexes and stimulates activities of RF-1 and RF-2. It binds guanine nucleotides and has strong preference for UGA stop codons. It may interact directly with the ribosome. The stimulation of RF-1 and RF-2 is significantly reduced by GTP and GDP, but not by GMP. The polypeptide is Peptide chain release factor 3 (Salmonella gallinarum (strain 287/91 / NCTC 13346)).